A 158-amino-acid chain; its full sequence is Snaclec alboaggregin-D subunit alpha (158 aa).

An N-terminal signal peptide occupies residues 1-23 (MGRFIFGSFGLLVVFLSLSGTGA). Intrachain disulfides connect C27-C38, C55-C152, and C127-C144. The C-type lectin domain occupies 34–153 (YDRYCYQAFS…CAELNPFICK (120 aa)).

It belongs to the snaclec family. Tetramer of heterodimers of alpha and beta subunits (alphabeta)(4); disulfide-linked. Expressed by the venom gland.

The protein resides in the secreted. In terms of biological role, snaclec that induces human platelet aggregation in the absence of any cofactor with the EC(50) of 0.25 nM and causes tyrosine phosphorylation in human platelets. Antibodies against either platelet GPIbalpha (GP1BA) or GPVI (GP6) inhibit alboaggregin D-induced platelet aggregation. Only the combination of these two antibodies completely inhibit aggregation, suggesting that it acts through both GPIbalpha (GP1BA) and GPVI (GP6). In Trimeresurus albolabris (White-lipped pit viper), this protein is Snaclec alboaggregin-D subunit alpha.